Here is a 102-residue protein sequence, read N- to C-terminus: NADH-quinone oxidoreductase subunit K 1 (102 aa).

Helical transmembrane passes span 5–25 (LYEVLILASILFAMGLACVVA), 30–50 (VIMMLIGIEIMLNAVMLTFVG), and 62–82 (VFSLMIMALTSAEVSLALAMV).

The protein belongs to the complex I subunit 4L family. NDH-1 is composed of 14 different subunits. Subunits NuoA, H, J, K, L, M, N constitute the membrane sector of the complex.

It localises to the cell inner membrane. The catalysed reaction is a quinone + NADH + 5 H(+)(in) = a quinol + NAD(+) + 4 H(+)(out). NDH-1 shuttles electrons from NADH, via FMN and iron-sulfur (Fe-S) centers, to quinones in the respiratory chain. The immediate electron acceptor for the enzyme in this species is believed to be ubiquinone. Couples the redox reaction to proton translocation (for every two electrons transferred, four hydrogen ions are translocated across the cytoplasmic membrane), and thus conserves the redox energy in a proton gradient. The chain is NADH-quinone oxidoreductase subunit K 1 from Citrifermentans bemidjiense (strain ATCC BAA-1014 / DSM 16622 / JCM 12645 / Bem) (Geobacter bemidjiensis).